The following is a 152-amino-acid chain: Putative pre-16S rRNA nuclease (152 aa).

Belongs to the YqgF nuclease family.

The protein localises to the cytoplasm. Could be a nuclease involved in processing of the 5'-end of pre-16S rRNA. This is Putative pre-16S rRNA nuclease from Nitrosococcus oceani (strain ATCC 19707 / BCRC 17464 / JCM 30415 / NCIMB 11848 / C-107).